A 92-amino-acid polypeptide reads, in one-letter code: Protein S100-B (92 aa).

Position 2 is an N-acetylserine (Ser2). EF-hand domains are found at residues 13–48 (DVFHQYSGREGDKHKLKKSELKELINNELSHFLEEI) and 49–84 (KEQEVVDKVMETLDEDGDGECDFQEFMAFVAMVTTA). His16 lines the Zn(2+) pocket. Ca(2+) is bound by residues Ser19, Glu22, and Asp24. Residue His26 participates in Zn(2+) binding. Positions 62, 64, 66, 68, and 73 each coordinate Ca(2+). 2 residues coordinate Zn(2+): His86 and His91.

The protein belongs to the S-100 family. As to quaternary structure, dimer of either two alpha chains, or two beta chains, or one alpha and one beta chain. The S100B dimer binds two molecules of STK38. Interacts with CACYBP in a calcium-dependent manner. Interacts with ATAD3A; this interaction probably occurs in the cytosol prior to ATAD3A mitochondrial targeting. Interacts with S100A6. The S100B dimer interacts with two molecules of CAPZA1. Interacts with AGER. Interacts with PPP5C (via TPR repeats); the interaction is calcium-dependent and modulates PPP5C activity. Interacts with TPPP; this interaction inhibits TPPP dimerization. Interacts with isoform CLSTN3beta of CLSTN3; interaction promotes secretion.

It localises to the cytoplasm. Its subcellular location is the nucleus. The protein resides in the secreted. In terms of biological role, small zinc- and- and calcium-binding protein that is highly expressed in astrocytes and constitutes one of the most abundant soluble proteins in brain. Weakly binds calcium but binds zinc very tightly-distinct binding sites with different affinities exist for both ions on each monomer. Physiological concentrations of potassium ion antagonize the binding of both divalent cations, especially affecting high-affinity calcium-binding sites. Acts as a neurotrophic factor that promotes astrocytosis and axonal proliferation. Involved in innervation of thermogenic adipose tissue by acting as an adipocyte-derived neurotrophic factor that promotes sympathetic innervation of adipose tissue. Binds to and initiates the activation of STK38 by releasing autoinhibitory intramolecular interactions within the kinase. Interaction with AGER after myocardial infarction may play a role in myocyte apoptosis by activating ERK1/2 and p53/TP53 signaling. Could assist ATAD3A cytoplasmic processing, preventing aggregation and favoring mitochondrial localization. May mediate calcium-dependent regulation on many physiological processes by interacting with other proteins, such as TPR-containing proteins, and modulating their activity. This is Protein S100-B from Mus musculus (Mouse).